The chain runs to 228 residues: Translin (228 aa).

The DNA/RNA binding stretch occupies residues Arg86 to His90. The interval Leu177–Leu198 is leucine-zipper. Lys187 is subject to N6-acetyllysine. Ser190 carries the phosphoserine modification. At Lys199 the chain carries N6-acetyllysine.

The protein belongs to the translin family. Ring-shaped heterooctamer of six TSN and two TSNAX subunits, DNA/RNA binding occurs inside the ring.

It localises to the cytoplasm. The protein localises to the nucleus. DNA-binding protein that specifically recognizes consensus sequences at the breakpoint junctions in chromosomal translocations, mostly involving immunoglobulin (Ig)/T-cell receptor gene segments. Seems to recognize single-stranded DNA ends generated by staggered breaks occurring at recombination hot spots. Functionally, exhibits both single-stranded and double-stranded endoribonuclease activity. May act as an activator of RNA-induced silencing complex (RISC) by facilitating endonucleolytic cleavage of the siRNA passenger strand. The sequence is that of Translin from Homo sapiens (Human).